Here is a 219-residue protein sequence, read N- to C-terminus: Glutathione S-transferase F13 (219 aa).

Residues 2–82 (AMKLYGDEMS…YIAEKHRDKG (81 aa)) form the GST N-terminal domain. Glutathione-binding positions include 11–12 (SA), 40–41 (HK), 53–54 (KV), and 66–67 (ES). Residues 90 to 217 (DPKEAAIVKL…VSPGLTVAPT (128 aa)) form the GST C-terminal domain.

The protein belongs to the GST superfamily. Phi family.

It is found in the cytoplasm. The protein localises to the cytosol. The catalysed reaction is RX + glutathione = an S-substituted glutathione + a halide anion + H(+). Its function is as follows. May be involved in the conjugation of reduced glutathione to a wide number of exogenous and endogenous hydrophobic electrophiles and have a detoxification role against certain herbicides. This Arabidopsis thaliana (Mouse-ear cress) protein is Glutathione S-transferase F13 (GSTF13).